The chain runs to 159 residues: Aspartate carbamoyltransferase regulatory chain (159 aa).

Residues cysteine 113, cysteine 118, cysteine 143, and cysteine 146 each contribute to the Zn(2+) site.

This sequence belongs to the PyrI family. Contains catalytic and regulatory chains. Requires Zn(2+) as cofactor.

Involved in allosteric regulation of aspartate carbamoyltransferase. The sequence is that of Aspartate carbamoyltransferase regulatory chain from Methanococcoides burtonii (strain DSM 6242 / NBRC 107633 / OCM 468 / ACE-M).